The primary structure comprises 234 residues: Ankyrin repeat-containing protein C6C3.08 (234 aa).

ANK repeat units lie at residues 36 to 66, 70 to 100, 106 to 135, 140 to 169, and 173 to 203; these read DKRTPLHWACSVGKVNTIYFLLKQPNIKPDE, AGWTPLMISINNRSVPDNVIEELINRSDVDP, GGQTCLHYAAGKGRLSIVQLLCDKAPELIR, QGQTPLHRAAAVGKIQVVKYLISQRAPLNT, and YGFTPLHFALAEGHPDVGVELVRAGADTLRK.

The protein is Ankyrin repeat-containing protein C6C3.08 of Schizosaccharomyces pombe (strain 972 / ATCC 24843) (Fission yeast).